The sequence spans 398 residues: Succinate--CoA ligase [ADP-forming] subunit beta (398 aa).

The 246-residue stretch at 9–254 folds into the ATP-grasp domain; the sequence is KRLLHEYGAP…ISEEDPKEIE (246 aa). Residues lysine 46, 53-55, glutamate 109, alanine 112, and glutamate 117 contribute to the ATP site; that span reads GRG. Positions 209 and 223 each coordinate Mg(2+). Substrate is bound by residues asparagine 274 and 331–333; that span reads GIM.

The protein belongs to the succinate/malate CoA ligase beta subunit family. In terms of assembly, heterotetramer of two alpha and two beta subunits. The cofactor is Mg(2+).

The enzyme catalyses succinate + ATP + CoA = succinyl-CoA + ADP + phosphate. It catalyses the reaction GTP + succinate + CoA = succinyl-CoA + GDP + phosphate. It functions in the pathway carbohydrate metabolism; tricarboxylic acid cycle; succinate from succinyl-CoA (ligase route): step 1/1. Succinyl-CoA synthetase functions in the citric acid cycle (TCA), coupling the hydrolysis of succinyl-CoA to the synthesis of either ATP or GTP and thus represents the only step of substrate-level phosphorylation in the TCA. The beta subunit provides nucleotide specificity of the enzyme and binds the substrate succinate, while the binding sites for coenzyme A and phosphate are found in the alpha subunit. This is Succinate--CoA ligase [ADP-forming] subunit beta from Bartonella bacilliformis (strain ATCC 35685 / KC583 / Herrer 020/F12,63).